The following is a 536-amino-acid chain: Membrane protein insertase YidC (536 aa).

The helical transmembrane segment at 7 to 27 threads the bilayer; the sequence is IIAVVLSLFVLIGWSYLSEFM. Residues 43–70 form a disordered region; it reads VQQKASEPVAQPVQTASAPAASSFAPTE. The span at 58-68 shows a compositional bias: low complexity; the sequence is ASAPAASSFAP. The next 3 membrane-spanning stretches (helical) occupy residues 346-366, 415-435, and 495-515; these read GNYGVAIIILTILVKLLFWPL, GGCLPMLLQIPVFLGLYQGLL, and IMMFMPVVFTFMFLNFPAGLV.

Belongs to the OXA1/ALB3/YidC family. Type 1 subfamily. As to quaternary structure, interacts with the Sec translocase complex via SecD. Specifically interacts with transmembrane segments of nascent integral membrane proteins during membrane integration.

It is found in the cell inner membrane. Its function is as follows. Required for the insertion and/or proper folding and/or complex formation of integral membrane proteins into the membrane. Involved in integration of membrane proteins that insert both dependently and independently of the Sec translocase complex, as well as at least some lipoproteins. Aids folding of multispanning membrane proteins. The polypeptide is Membrane protein insertase YidC (Oleidesulfovibrio alaskensis (strain ATCC BAA-1058 / DSM 17464 / G20) (Desulfovibrio alaskensis)).